The sequence spans 504 residues: Anthocyanidin 3-O-glucoside 5-O-glucosyltransferase (504 aa).

His-23 (proton acceptor) is an active-site residue. His-23 contributes to the an anthocyanidin binding site. Positions 107-126 (TKKGQGQGQGQGQGQGQGQG) are disordered. The segment covering 111–125 (QGQGQGQGQGQGQGQ) has biased composition (gly residues). Thr-157, Gln-377, His-392, Trp-395, Asn-396, Ser-397, Glu-400, Asp-416, and Gln-417 together coordinate UDP-alpha-D-glucose.

It belongs to the UDP-glycosyltransferase family. As to expression, predominantly expressed in petals and weakly in filaments. Not expressed in leaves, stems and other floral organs.

It catalyses the reaction an anthocyanidin 3-O-beta-D-glucoside + UDP-alpha-D-glucose = an anthocyanidin 3,5-di-O-beta-D-glucoside + UDP + 2 H(+). Its pathway is pigment biosynthesis; anthocyanin biosynthesis. Catalyzes the glucosylation at the O-5 position of anthocyanidin 3-glucosides to form anthocyanidin 3,5-di-O-glucosides using UDP-glucose as sugar donor. Anthocyanidin 3,5-di-O-glucosides are molecules that are responsible for pigmentation. Involved in biosynsthesis of accumulate gentiodelphin, a unique polyacylated delphinidin-type anthocyanin, in the petals. Also acts on anthocyanidin 3-O-(6-O-malonylglucoside). Much less active with hydroxycinnamoylglucose derivatives. No activity in the absence of the 3-O-glucoside group. In Gentiana triflora (Clustered gentian), this protein is Anthocyanidin 3-O-glucoside 5-O-glucosyltransferase (5GT7).